The primary structure comprises 1135 residues: Potassium channel subfamily T member 2 (1135 aa).

Topologically, residues 1–63 are cytoplasmic; the sequence is MVDLESEVPP…KNQRSSLRIR (63 aa). The chain crosses the membrane as a helical span at residues 64–84; it reads LFNFSLKLLSCLLYIIRVLLE. Residues 85–101 are Extracellular-facing; sequence KPSQGSEWSHIFWVNRS. The helical transmembrane segment at 102–122 threads the bilayer; the sequence is LPLWGLQVSVALISLFETILL. Over 123–137 the chain is Cytoplasmic; that stretch reads GYLSYKGNIWEQILR. The chain crosses the membrane as a helical span at residues 138 to 158; sequence IPFILEIINAVPFIISIFWPT. Over 159 to 164 the chain is Extracellular; it reads LRNLFV. The helical transmembrane segment at 165 to 185 threads the bilayer; it reads PVFLNCWLAKHALENMINDLH. The Cytoplasmic portion of the chain corresponds to 186–198; sequence RAIQRTQSAMFNQ. A helical transmembrane segment spans residues 199–219; sequence VLILISTLLCLIFTCICGIQH. Residues 220–228 are Extracellular-facing; that stretch reads LERIGKKLN. The segment at residues 229 to 249 is an intramembrane region (pore-forming); sequence LFDSLYFCIVTFSTVGFGDVT. Residues 250–256 lie on the Extracellular side of the membrane; sequence PETWSSK. A helical transmembrane segment spans residues 257–277; that stretch reads LFVVAMICVALVVLPIQFEQL. Topologically, residues 278-1135 are cytoplasmic; that stretch reads AYLWMERQKS…VQDSREETQL (858 aa). RCK N-terminal domains are found at residues 299–435 and 718–858; these read EKHV…DHVV and NKLI…CYSL. Disordered regions lie at residues 982–1036 and 1111–1135; these read DTKD…AEKI and PNSE…ETQL. Basic residues predominate over residues 1010 to 1030; it reads LRRKSMQWARRLSRKGPKHSG. Positions 1111 to 1122 are enriched in polar residues; sequence PNSEPSRKNSIC.

The protein belongs to the potassium channel family. Calcium-activated (TC 1.A.1.3) subfamily. KCa4.2/KCNT2 sub-subfamily. Homotetramer. Forms heteromeric channels with KCNT1. These heterodimer channels differ from the homomers in their unitary conductance, kinetic behavior, subcellular localization, and response to activation of protein kinase C. Phosphorylated by protein kinase C. Phosphorylation of the C-terminal domain inhibits channel activity. In terms of tissue distribution, within the dorsal root ganglia (DRGs), exclusively expressed in small-sized and medium-sized calcitonin gene-related peptide (CGRP)-containing DRG neurons.

Its subcellular location is the cell membrane. It catalyses the reaction K(+)(in) = K(+)(out). Are normally in a closed state unless activated by an increase in intracellular Na(+) and Cl(-). Inhibited upon stimulation of G-protein coupled receptors, such as CHRM1 and GRM1. There is conflicting data about the effect of ATP on KNCT2 channels activity. Intracellular ATP was initially report to inhibit the channel activity. However, others studies conclude that KNCT2 channels are not inhibited by intracellular ATP. Its function is as follows. Sodium-activated and chloride-activated potassium channel. Produces rapidly activating outward rectifier K(+) currents. Contributes to regulate neuronal excitability. The protein is Potassium channel subfamily T member 2 (Kcnt2) of Mus musculus (Mouse).